The primary structure comprises 258 residues: MLEQIIATKKKEIETLTLSKPLQNVQRRSLSAALKKPNRSIGLIAEVKKASPSKGLIRPDFHPVAIAKAYEKAGADAISVLTDERYFQGHRGYLSDIKQAVQLPILRKDFIIDRIQIEESVRIGADAILLIGEALPAKTLYELYQEAYDKGLECLVEVHQRETLENILDIFTPEIIGINNRDLHTFVTSLETTSKVIPFVPSGSVIVSESGISTSHDLKTVQTYGADAVLVGESLMRKDDVEAAIYELFREVESIAGP.

This sequence belongs to the TrpC family.

It catalyses the reaction 1-(2-carboxyphenylamino)-1-deoxy-D-ribulose 5-phosphate + H(+) = (1S,2R)-1-C-(indol-3-yl)glycerol 3-phosphate + CO2 + H2O. Its pathway is amino-acid biosynthesis; L-tryptophan biosynthesis; L-tryptophan from chorismate: step 4/5. This is Indole-3-glycerol phosphate synthase from Geobacillus sp. (strain WCH70).